The primary structure comprises 550 residues: Arginine--tRNA ligase (550 aa).

Residues 130 to 140 (ANPTGPIHLGG) carry the 'HIGH' region motif.

This sequence belongs to the class-I aminoacyl-tRNA synthetase family. As to quaternary structure, monomer.

It localises to the cytoplasm. It catalyses the reaction tRNA(Arg) + L-arginine + ATP = L-arginyl-tRNA(Arg) + AMP + diphosphate. The chain is Arginine--tRNA ligase from Corynebacterium glutamicum (strain R).